An 833-amino-acid chain; its full sequence is Leucine--tRNA ligase (833 aa).

The short motif at 41 to 52 (PYPSGAGLHVGH) is the 'HIGH' region element. A 'KMSKS' region motif is present at residues 610–614 (KMSKS). Lys613 is an ATP binding site.

The protein belongs to the class-I aminoacyl-tRNA synthetase family.

The protein localises to the cytoplasm. The enzyme catalyses tRNA(Leu) + L-leucine + ATP = L-leucyl-tRNA(Leu) + AMP + diphosphate. The sequence is that of Leucine--tRNA ligase from Streptococcus pyogenes serotype M6 (strain ATCC BAA-946 / MGAS10394).